Reading from the N-terminus, the 400-residue chain is Spaetzle-processing enzyme (400 aa).

An N-terminal signal peptide occupies residues 1–27 (MASTERNFLLLSLVVSALSGLVHRSDA). In terms of domain architecture, Clip spans 34–94 (SCTPQQSDER…GLVNRILVCC (61 aa)). 6 cysteine pairs are disulfide-bonded: cysteine 35–cysteine 93, cysteine 46–cysteine 77, cysteine 52–cysteine 94, cysteine 127–cysteine 269, cysteine 166–cysteine 182, and cysteine 211–cysteine 221. The Peptidase S1 domain occupies 135–399 (IFGGTNTTLW…FIDWIKQKLE (265 aa)). Asparagine 140 carries N-linked (GlcNAc...) asparagine glycosylation. The active-site Charge relay system is the histidine 181. The Ca(2+) site is built by glutamate 202, aspartate 204, threonine 207, and aspartate 210. The active-site Charge relay system is the aspartate 249. A glycan (N-linked (GlcNAc...) asparagine) is linked at asparagine 311. Disulfide bonds link cysteine 315-cysteine 332 and cysteine 342-cysteine 375. Catalysis depends on serine 346, which acts as the Charge relay system.

This sequence belongs to the peptidase S1 family. CLIP subfamily. As to quaternary structure, in the active form, heterodimer of a light chain and a heavy chain; disulfide-linked. Proteolytically cleaved in response to Gram-negative bacterial or fungal infection; processing is likely to result in its activation. Cleavage produces a light chain containing the CLIP domain and a catalytic heavy chain which remain covalently associated through an interchain disulfide bond.

It is found in the secreted. Functionally, endopeptidase which plays a key role in innate immunity by cleaving Tl ligand spz and thereby activating the Toll pathway in response to fungal and Gram-positive bacterial infections. Acts downstream of pathogen recognition receptors PGRP-SA and GNBP1 and protease grass in response to Gram-positive bacterial infection. Acts downstream of protease psh in response to fungal infection. The chain is Spaetzle-processing enzyme from Drosophila melanogaster (Fruit fly).